The following is a 353-amino-acid chain: Photosystem II D2 protein (353 aa).

N-acetylthreonine is present on T2. T2 carries the post-translational modification Phosphothreonine. The helical transmembrane segment at 41-61 (CAYFALGGWLTGTTFVTSWYT) threads the bilayer. H118 contacts chlorophyll a. Residues 125–141 (GFMLRQFELARSVQLRP) traverse the membrane as a helical segment. Residues Q130 and N143 each contribute to the pheophytin a site. Residues 153–166 (VFVSVFLIYPLGQS) traverse the membrane as a helical segment. H198 is a binding site for chlorophyll a. The helical transmembrane segment at 208 to 228 (AALLCAIHGATVENTLFEDGD) threads the bilayer. Positions 215 and 262 each coordinate a plastoquinone. H215 provides a ligand contact to Fe cation. H269 lines the Fe cation pocket. The chain crosses the membrane as a helical span at residues 279–295 (GLWMSAIGVVGLALNLR).

The protein belongs to the reaction center PufL/M/PsbA/D family. PSII is composed of 1 copy each of membrane proteins PsbA, PsbB, PsbC, PsbD, PsbE, PsbF, PsbH, PsbI, PsbJ, PsbK, PsbL, PsbM, PsbT, PsbX, PsbY, PsbZ, Psb30/Ycf12, at least 3 peripheral proteins of the oxygen-evolving complex and a large number of cofactors. It forms dimeric complexes. The D1/D2 heterodimer binds P680, chlorophylls that are the primary electron donor of PSII, and subsequent electron acceptors. It shares a non-heme iron and each subunit binds pheophytin, quinone, additional chlorophylls, carotenoids and lipids. There is also a Cl(-1) ion associated with D1 and D2, which is required for oxygen evolution. The PSII complex binds additional chlorophylls, carotenoids and specific lipids. is required as a cofactor.

The protein localises to the plastid. It localises to the chloroplast thylakoid membrane. It catalyses the reaction 2 a plastoquinone + 4 hnu + 2 H2O = 2 a plastoquinol + O2. Functionally, photosystem II (PSII) is a light-driven water:plastoquinone oxidoreductase that uses light energy to abstract electrons from H(2)O, generating O(2) and a proton gradient subsequently used for ATP formation. It consists of a core antenna complex that captures photons, and an electron transfer chain that converts photonic excitation into a charge separation. The D1/D2 (PsbA/PsbD) reaction center heterodimer binds P680, the primary electron donor of PSII as well as several subsequent electron acceptors. D2 is needed for assembly of a stable PSII complex. In Zygnema circumcarinatum (Green alga), this protein is Photosystem II D2 protein.